We begin with the raw amino-acid sequence, 194 residues long: Thioredoxin O1, mitochondrial (194 aa).

The transit peptide at 1–42 directs the protein to the mitochondrion; sequence MKGNWSIVRKVLHRQFSTLRSSTPSSRLSTSIRPLVLAPNSI. Ser75 carries the phosphoserine modification. Residues 89 to 194 enclose the Thioredoxin domain; the sequence is VKSEEEFINA…LKNLMEQLYK (106 aa). Active-site nucleophile residues include Cys118 and Cys121. Cys118 and Cys121 are disulfide-bonded.

This sequence belongs to the thioredoxin family. Plant O-type subfamily.

Its subcellular location is the mitochondrion matrix. Its function is as follows. Thiol-disulfide oxidoreductase that may participate in various redox reactions. Possesses insulin disulfide bonds reducing activity. Reduced by thioredoxin reductases NTRA and NTRB. The chain is Thioredoxin O1, mitochondrial from Arabidopsis thaliana (Mouse-ear cress).